Reading from the N-terminus, the 354-residue chain is UDP-3-O-acylglucosamine N-acyltransferase (354 aa).

Residue His247 is the Proton acceptor of the active site.

The protein belongs to the transferase hexapeptide repeat family. LpxD subfamily. In terms of assembly, homotrimer.

It carries out the reaction a UDP-3-O-[(3R)-3-hydroxyacyl]-alpha-D-glucosamine + a (3R)-hydroxyacyl-[ACP] = a UDP-2-N,3-O-bis[(3R)-3-hydroxyacyl]-alpha-D-glucosamine + holo-[ACP] + H(+). It functions in the pathway bacterial outer membrane biogenesis; LPS lipid A biosynthesis. Functionally, catalyzes the N-acylation of UDP-3-O-acylglucosamine using 3-hydroxyacyl-ACP as the acyl donor. Is involved in the biosynthesis of lipid A, a phosphorylated glycolipid that anchors the lipopolysaccharide to the outer membrane of the cell. The sequence is that of UDP-3-O-acylglucosamine N-acyltransferase from Chlamydia trachomatis serovar L2 (strain ATCC VR-902B / DSM 19102 / 434/Bu).